The chain runs to 244 residues: MNPQLSPKAIREIREGTCNPLGAPQVTTDLSENIILTSLDDLHNWARLSSLWPLLYGTACCFIEFAALIGSRFDFDRFGLVPRSSPRQADLLIVAGTVTMKMAPALVRLYEQMPEPKYVIAMGACTITGGMFSADSTTAVRGVDKLIPVDLYLPGCPPRPEAIFDAVIKLRKKVGNESILEREKTEQTHRYITYKHEMNLVFSQNTGEYLNKTSTNVFPSSKKEKITELPENREQTEIINSEEE.

4 residues coordinate [4Fe-4S] cluster: cysteine 60, cysteine 61, cysteine 125, and cysteine 156. Residues 221–236 (SKKEKITELPENREQT) show a composition bias toward basic and acidic residues. The tract at residues 221–244 (SKKEKITELPENREQTEIINSEEE) is disordered.

The protein belongs to the complex I 20 kDa subunit family. In terms of assembly, NDH-1 can be composed of about 15 different subunits; different subcomplexes with different compositions have been identified which probably have different functions. Requires [4Fe-4S] cluster as cofactor.

It is found in the cellular thylakoid membrane. It carries out the reaction a plastoquinone + NADH + (n+1) H(+)(in) = a plastoquinol + NAD(+) + n H(+)(out). It catalyses the reaction a plastoquinone + NADPH + (n+1) H(+)(in) = a plastoquinol + NADP(+) + n H(+)(out). NDH-1 shuttles electrons from an unknown electron donor, via FMN and iron-sulfur (Fe-S) centers, to quinones in the respiratory and/or the photosynthetic chain. The immediate electron acceptor for the enzyme in this species is believed to be plastoquinone. Couples the redox reaction to proton translocation, and thus conserves the redox energy in a proton gradient. Cyanobacterial NDH-1 also plays a role in inorganic carbon-concentration. This chain is NAD(P)H-quinone oxidoreductase subunit K, found in Prochlorococcus marinus (strain MIT 9312).